A 213-amino-acid polypeptide reads, in one-letter code: Uridine kinase (213 aa).

Gly13–Ser20 lines the ATP pocket.

It belongs to the uridine kinase family.

The protein resides in the cytoplasm. It carries out the reaction uridine + ATP = UMP + ADP + H(+). It catalyses the reaction cytidine + ATP = CMP + ADP + H(+). Its pathway is pyrimidine metabolism; CTP biosynthesis via salvage pathway; CTP from cytidine: step 1/3. It functions in the pathway pyrimidine metabolism; UMP biosynthesis via salvage pathway; UMP from uridine: step 1/1. In Haemophilus influenzae (strain PittEE), this protein is Uridine kinase.